A 67-amino-acid chain; its full sequence is Small ribosomal subunit protein eS17 (67 aa).

It belongs to the eukaryotic ribosomal protein eS17 family. In terms of assembly, part of the 30S ribosomal subunit.

In Pyrococcus furiosus (strain ATCC 43587 / DSM 3638 / JCM 8422 / Vc1), this protein is Small ribosomal subunit protein eS17.